The primary structure comprises 61 residues: MPELQERIRNFLKESKRVFLVTRKPGWEEYKKAAKITGLGIILIGLIGMLIRIMGILVLGG.

A helical transmembrane segment spans residues 39–59 (LGIILIGLIGMLIRIMGILVL).

The protein belongs to the SecE/SEC61-gamma family. Component of the Sec protein translocase complex. Heterotrimer consisting of SecY (alpha), SecG (beta) and SecE (gamma) subunits. The heterotrimers can form oligomers, although 1 heterotrimer is thought to be able to translocate proteins. Interacts with the ribosome. May interact with SecDF, and other proteins may be involved.

It localises to the cell membrane. Its function is as follows. Essential subunit of the Sec protein translocation channel SecYEG. Clamps together the 2 halves of SecY. May contact the channel plug during translocation. The sequence is that of Protein translocase subunit SecE from Pyrococcus abyssi (strain GE5 / Orsay).